Consider the following 140-residue polypeptide: Ig heavy chain V region 93G7 (140 aa).

The signal sequence occupies residues 1–19; that stretch reads MGWSFIFLFLLSVTAGVHS. In terms of domain architecture, Ig-like spans 20–139; it reads EVQLQQSGAE…WGQGTPLTVS (120 aa).

The polypeptide is Ig heavy chain V region 93G7 (Mus musculus (Mouse)).